Consider the following 537-residue polypeptide: Sodium/hydrogen exchanger 9B2 (537 aa).

Residues 1 to 10 (MGDEDKRITY) show a composition bias toward basic and acidic residues. The disordered stretch occupies residues 1–33 (MGDEDKRITYEDSEPSTGMNYTPSMHQETQEET). Residues 1–86 (MGDEDKRITY…ACPPHGLLDR (86 aa)) lie on the Cytoplasmic side of the membrane. Residues 15-27 (PSTGMNYTPSMHQ) show a composition bias toward polar residues. Phosphoserine is present on Ser49. A helical membrane pass occupies residues 87–104 (VVTNVTIIVLLWAVIWSI). Topologically, residues 105-113 (TGSECLPGG) are extracellular. The helical transmembrane segment at 114-133 (NLFGIIILFYCAIIGGKLLG) threads the bilayer. Residues 134-144 (LIKLPTLPPLP) are Cytoplasmic-facing. A helical membrane pass occupies residues 145 to 161 (SLLGMLLAGFLIRNIPV). Over 162–171 (INDNVQIKHK) the chain is Extracellular. The chain crosses the membrane as a helical span at residues 172–189 (WSSSLRSIALSIILVRAG). The Cytoplasmic segment spans residues 190–200 (LGLDSKALKKL). The chain crosses the membrane as a helical span at residues 201–227 (KGVCVRLSMGPCIVEACTSALLAHYLL). The Extracellular portion of the chain corresponds to 228 to 233 (GLPWQW). A helical transmembrane segment spans residues 234–242 (GFILGFVLG). Over 243–270 (AVSPAVVVPSMLLLQGGGYGVEKGVPTL) the chain is Cytoplasmic. Na(+) is bound by residues Val244, Gly275, Asp278, and Asp279. The helical transmembrane segment at 271–290 (LMAAGSFDDILAITGFNTCL) threads the bilayer. Over 291–300 (GIAFSTGSTV) the chain is Extracellular. Residues 301–324 (FNVLRGVLEVVIGVATGSVLGFFI) form a helical membrane-spanning segment. Topologically, residues 325-339 (QYFPSCDQDKLVCKR) are cytoplasmic. A helical transmembrane segment spans residues 340–357 (TFLVLGLSVLAVFSSVHF). Residues 358-361 (GFPG) are Extracellular-facing. Residues 362–373 (SGGLCTLVMAFL) traverse the membrane as a helical segment. Over 374-390 (AGMGWTSEKAEVEKIIA) the chain is Cytoplasmic. A helical transmembrane segment spans residues 391 to 411 (VAWDIFQPLLFGLIGAEVSIA). At 412 to 417 (SLRPET) the chain is on the extracellular side. Residues 418-440 (VGLCVATVGIAVLIRILTTFLMV) traverse the membrane as a helical segment. The Cytoplasmic segment spans residues 441–461 (CFAGFNLKEKIFISFAWLPKA). The chain crosses the membrane as a helical span at residues 462–473 (TVQAAIGSVALD). Residues 474-486 (TARSHGEKQLEDY) are Extracellular-facing. A helical membrane pass occupies residues 487-509 (GMDVLTVAFLSILITAPIGSLLI). Residues 510–537 (GLLGPRLLQKVEHQNKDEEVQGETSVQV) lie on the Cytoplasmic side of the membrane.

This sequence belongs to the monovalent cation:proton antiporter 1 (CPA1) transporter (TC 2.A.36) family. In terms of assembly, homodimer; dimerization is essential for SLC9B2 activity. Lipids seem to play a role in the stabilization of the dimerization subdomain.

Its subcellular location is the cell membrane. It localises to the mitochondrion membrane. The protein resides in the endosome membrane. The protein localises to the recycling endosome membrane. It is found in the cytoplasmic vesicle. Its subcellular location is the secretory vesicle. It localises to the synaptic vesicle membrane. The protein resides in the basolateral cell membrane. The protein localises to the apical cell membrane. It catalyses the reaction Li(+)(out) + H(+)(in) = Li(+)(in) + H(+)(out). The catalysed reaction is Li(+)(in) + Na(+)(out) = Li(+)(out) + Na(+)(in). The enzyme catalyses Na(+)(in) + H(+)(out) = Na(+)(out) + H(+)(in). Its activity is regulated as follows. Allosterically inhibited by the N-terminal domain. Inhibited by phloretin. In terms of biological role, electroneutral Na(+) Li(+)/H(+) antiporter that extrudes Na(+) or Li(+) in exchange for external protons across the membrane. Uses the proton gradient/membrane potential to extrude sodium. Contributes to the regulation of intracellular pH and sodium homeostasis. Also able to mediate Na(+)/Li(+) antiporter activity in kidney. May play a physiological role in renal tubular function and blood pressure homeostasis. Plays an important role for insulin secretion and clathrin-mediated endocytosis in beta-cells. Involved in sperm motility and fertility. It is controversial whether SLC9B2 plays a role in osteoclast differentiation or not. This is Sodium/hydrogen exchanger 9B2 (SLC9B2) from Pongo abelii (Sumatran orangutan).